Here is a 351-residue protein sequence, read N- to C-terminus: Inositol monophosphatase 3 (351 aa).

A helical transmembrane segment spans residues 11–31 (LGIGVFCLLALGVLYHVYSGF). 5 residues coordinate Mg(2+): glutamate 121, aspartate 162, leucine 164, aspartate 165, and aspartate 288. A substrate-binding site is contributed by glutamate 121. Substrate-binding positions include 164–167 (LDAT) and aspartate 288.

The protein belongs to the inositol monophosphatase superfamily. Requires Mg(2+) as cofactor.

Its subcellular location is the membrane. It catalyses the reaction a myo-inositol phosphate + H2O = myo-inositol + phosphate. The protein operates within polyol metabolism; myo-inositol biosynthesis; myo-inositol from D-glucose 6-phosphate: step 2/2. This Xenopus laevis (African clawed frog) protein is Inositol monophosphatase 3 (bpnt2).